Consider the following 272-residue polypeptide: Putative phosphoenolpyruvate synthase regulatory protein (272 aa).

152 to 159 (GVSRSGKT) serves as a coordination point for ADP.

It belongs to the pyruvate, phosphate/water dikinase regulatory protein family. PSRP subfamily.

The enzyme catalyses [pyruvate, water dikinase] + ADP = [pyruvate, water dikinase]-phosphate + AMP + H(+). It carries out the reaction [pyruvate, water dikinase]-phosphate + phosphate + H(+) = [pyruvate, water dikinase] + diphosphate. Functionally, bifunctional serine/threonine kinase and phosphorylase involved in the regulation of the phosphoenolpyruvate synthase (PEPS) by catalyzing its phosphorylation/dephosphorylation. This chain is Putative phosphoenolpyruvate synthase regulatory protein, found in Hahella chejuensis (strain KCTC 2396).